The chain runs to 326 residues: DNA-directed RNA polymerase subunit alpha (326 aa).

Positions 1–230 are alpha N-terminal domain (alpha-NTD); it reads MLKIEKQAKA…LHLDPFLEIG (230 aa). Residues 249 to 326 form an alpha C-terminal domain (alpha-CTD) region; sequence DIQVIDDKSH…YDLEKNGSPE (78 aa).

It belongs to the RNA polymerase alpha chain family. Homodimer. The RNAP catalytic core consists of 2 alpha, 1 beta, 1 beta' and 1 omega subunit. When a sigma factor is associated with the core the holoenzyme is formed, which can initiate transcription.

It carries out the reaction RNA(n) + a ribonucleoside 5'-triphosphate = RNA(n+1) + diphosphate. In terms of biological role, DNA-dependent RNA polymerase catalyzes the transcription of DNA into RNA using the four ribonucleoside triphosphates as substrates. In Fusobacterium nucleatum subsp. nucleatum (strain ATCC 25586 / DSM 15643 / BCRC 10681 / CIP 101130 / JCM 8532 / KCTC 2640 / LMG 13131 / VPI 4355), this protein is DNA-directed RNA polymerase subunit alpha.